The chain runs to 67 residues: Large ribosomal subunit protein uL29 (67 aa).

This sequence belongs to the universal ribosomal protein uL29 family.

The sequence is that of Large ribosomal subunit protein uL29 from Desulforudis audaxviator (strain MP104C).